A 528-amino-acid chain; its full sequence is Sulfhydryl oxidase 1 (528 aa).

Residues 1 to 19 (MSLIHLFLLLGLLSLEAAA) form the signal peptide. Residues 35–170 (NVADQKDNAI…LLNWINKQIG (136 aa)) form the Thioredoxin domain. N-linked (GlcNAc...) asparagine glycosylation is present at Asn47. Residues Cys72 and Cys75 each act as nucleophile in the active site. A disulfide bridge connects residues Cys72 and Cys75. Asn186 and Asn297 each carry an N-linked (GlcNAc...) asparagine glycan. Cys292 and Cys304 are oxidised to a cystine. Positions 295 to 397 (SKNETRGFSC…GDPKFPKMIW (103 aa)) constitute an ERV/ALR sulfhydryl oxidase domain. FAD contacts are provided by residues Arg300, Trp307, His311, Asp341, His345, 368–375 (WSTHNKVN), Lys394, and Trp397. Cys339 and Cys342 are disulfide-bonded. Cys403 and Cys406 are disulfide-bonded.

FAD serves as cofactor. As to expression, highly expressed in roots.

The protein localises to the secreted. The protein resides in the cell wall. The enzyme catalyses 2 R'C(R)SH + O2 = R'C(R)S-S(R)CR' + H2O2. Its function is as follows. Sulfhydryl oxidase involved in the regulation of cation homeostasis. Positively regulates shoot accumulation of K(+) and inhibits accumulation of toxic cations. Acts at the level of root K(+) efflux systems involved in xylem loading (root symplast-xylem interface). In Arabidopsis thaliana (Mouse-ear cress), this protein is Sulfhydryl oxidase 1 (QSOX1).